A 145-amino-acid chain; its full sequence is D-aminoacyl-tRNA deacylase (145 aa).

The Gly-cisPro motif, important for rejection of L-amino acids motif lies at 137–138; sequence GP.

This sequence belongs to the DTD family. Homodimer.

The protein resides in the cytoplasm. The catalysed reaction is glycyl-tRNA(Ala) + H2O = tRNA(Ala) + glycine + H(+). It carries out the reaction a D-aminoacyl-tRNA + H2O = a tRNA + a D-alpha-amino acid + H(+). Its function is as follows. An aminoacyl-tRNA editing enzyme that deacylates mischarged D-aminoacyl-tRNAs. Also deacylates mischarged glycyl-tRNA(Ala), protecting cells against glycine mischarging by AlaRS. Acts via tRNA-based rather than protein-based catalysis; rejects L-amino acids rather than detecting D-amino acids in the active site. By recycling D-aminoacyl-tRNA to D-amino acids and free tRNA molecules, this enzyme counteracts the toxicity associated with the formation of D-aminoacyl-tRNA entities in vivo and helps enforce protein L-homochirality. The chain is D-aminoacyl-tRNA deacylase from Klebsiella pneumoniae (strain 342).